A 526-amino-acid chain; its full sequence is Nucleolar complex protein 4 homolog A (526 aa).

Helical transmembrane passes span 307 to 327 (AAYD…FILI), 358 to 378 (FFHL…LVAA), and 386 to 406 (LALT…CNLI).

This sequence belongs to the CBF/MAK21 family.

It localises to the nucleus membrane. It is found in the nucleus. The protein localises to the nucleolus. In Xenopus laevis (African clawed frog), this protein is Nucleolar complex protein 4 homolog A (noc4l-a).